We begin with the raw amino-acid sequence, 651 residues long: L-type lectin-domain containing receptor kinase IX.1 (651 aa).

The N-terminal stretch at 1-19 (MANSILLFSFVLVLPFVCS) is a signal peptide. Residues 20 to 251 (VQFNISRFGS…GNRLLSWEFS (232 aa)) form a legume-lectin like region. The Extracellular segment spans residues 20-269 (VQFNISRFGS…KKSQNDKKGM (250 aa)). N-linked (GlcNAc...) asparagine glycans are attached at residues asparagine 23, asparagine 125, asparagine 129, asparagine 162, asparagine 169, asparagine 174, asparagine 195, and asparagine 211. The helical transmembrane segment at 270–290 (IIGISVSGFVLLTFFITSLIV) threads the bilayer. Over 291 to 651 (FLKRKQQKKK…VTFSSAQHGR (361 aa)) the chain is Cytoplasmic. Positions 335 to 616 (FADDRKLGEG…LNLEAPVPHL (282 aa)) constitute a Protein kinase domain. Residues 341-349 (LGEGGFGAV) and lysine 364 each bind ATP. The active-site Proton acceptor is aspartate 459. The tract at residues 630-651 (SNTTSVSSGGATVTFSSAQHGR) is disordered.

In the C-terminal section; belongs to the protein kinase superfamily. Ser/Thr protein kinase family. The protein in the N-terminal section; belongs to the leguminous lectin family. Interacts with ABCG40.

It localises to the cell membrane. It carries out the reaction L-seryl-[protein] + ATP = O-phospho-L-seryl-[protein] + ADP + H(+). The catalysed reaction is L-threonyl-[protein] + ATP = O-phospho-L-threonyl-[protein] + ADP + H(+). Its function is as follows. Promotes hydrogen peroxide H(2)O(2) production and cell death. In terms of biological role, involved in resistance response to the pathogenic oomycetes Phytophthora infestans and Phytophthora capsici. This chain is L-type lectin-domain containing receptor kinase IX.1, found in Arabidopsis thaliana (Mouse-ear cress).